The following is a 297-amino-acid chain: MKKGKMIIISGPSGVGKGSVNGELLQNPDLHLRYSVSMTTRKPRNGEVDGVNYFFVSNEEFAKAIVNDELIEYAHFVGNSYGTPRKYVEQELKKGNNVILEIEVDGATQVLNKEPNVLSIFLMPPNPTELANRIRGRQTEDEEKIKARLDKALLEIPLKHNYQYVIENDNVPNAVAKITDVLHLEGLTDIKTPTVYERLEQIVEQIVKEKYMYFVNNWETNVKLLAKNEEEKNKAKNFDAETYLIKLLTKKVYHKVLGHGDFSKLLDKDFVDFKIQKLMFKINFFSVEQKHYNNDEF.

A Guanylate kinase-like domain is found at 4 to 183 (GKMIIISGPS…AVAKITDVLH (180 aa)). 11–18 (GPSGVGKG) lines the ATP pocket. The segment at 204-297 (EQIVKEKYMY…EQKHYNNDEF (94 aa)) is unknown.

Belongs to the guanylate kinase family.

The protein resides in the cytoplasm. It carries out the reaction GMP + ATP = GDP + ADP. Functionally, essential for recycling GMP and indirectly, cGMP. This chain is Guanylate kinase (gmk), found in Mycoplasma mycoides subsp. mycoides SC (strain CCUG 32753 / NCTC 10114 / PG1).